A 227-amino-acid chain; its full sequence is Mitochondrial inner membrane protease ATP23 (227 aa).

An a divalent metal cation-binding site is contributed by His124. Glu125 is a catalytic residue. His128 is an a divalent metal cation binding site.

It belongs to the peptidase M76 family. In terms of assembly, interacts with ATP6.

The protein localises to the mitochondrion inner membrane. Its function is as follows. Has a dual role in the assembly of mitochondrial ATPase. Acts as a protease that removes the N-terminal 10 residues of mitochondrial ATPase CF(0) subunit 6 (ATP6) at the intermembrane space side. Also involved in the correct assembly of the membrane-embedded ATPase CF(0) particle, probably mediating association of ATP6 with the subunit 9 ring. The polypeptide is Mitochondrial inner membrane protease ATP23 (ATP23) (Saccharomyces cerevisiae (strain YJM789) (Baker's yeast)).